The sequence spans 475 residues: uncharacterized protein (475 aa).

A coiled-coil region spans residues 185–244 (EISVSAISEQLASLMERVDKLEKMNAALEEENKQLKKEREATIKSVKKEAKKIKQEKPQI).

This is an uncharacterized protein from Nora virus.